We begin with the raw amino-acid sequence, 277 residues long: Protein RKD3 (277 aa).

The 85-residue stretch at 142 to 226 folds into the RWP-RK domain; it reads KRIIMKRRYR…LGNTKGRTPK (85 aa). Residues 201–246 are a coiled coil; the sequence is RKLTSLNALIANLKDLLGNTKGRTPKSKLRNALELLEMEKKMIEEV.

It is found in the nucleus. In terms of biological role, putative transcription factor. This Arabidopsis thaliana (Mouse-ear cress) protein is Protein RKD3 (RKD3).